Here is a 316-residue protein sequence, read N- to C-terminus: Ribosomal RNA small subunit methyltransferase H (316 aa).

Residues 35–37, Asp-55, Phe-84, Asp-105, and Gln-112 each bind S-adenosyl-L-methionine; that span reads SGH.

This sequence belongs to the methyltransferase superfamily. RsmH family.

The protein localises to the cytoplasm. It catalyses the reaction cytidine(1402) in 16S rRNA + S-adenosyl-L-methionine = N(4)-methylcytidine(1402) in 16S rRNA + S-adenosyl-L-homocysteine + H(+). Specifically methylates the N4 position of cytidine in position 1402 (C1402) of 16S rRNA. The chain is Ribosomal RNA small subunit methyltransferase H from Streptococcus pyogenes serotype M49 (strain NZ131).